The chain runs to 199 residues: Elongation factor Ts, chloroplastic (199 aa).

It belongs to the EF-Ts family.

The protein resides in the plastid. It localises to the chloroplast. Associates with the EF-Tu.GDP complex and induces the exchange of GDP to GTP. It remains bound to the aminoacyl-tRNA.EF-Tu.GTP complex up to the GTP hydrolysis stage on the ribosome. This is Elongation factor Ts, chloroplastic (tsf) from Galdieria sulphuraria (Red alga).